Consider the following 79-residue polypeptide: MTAAEIKDKVYDIIVSKMGVNRDQIKMESKFSDDLGADSLDTVELIMELESEFGVQIPDEDAEKIGTVQQAIDYIVNKK.

In terms of domain architecture, Carrier spans 4-79 (AEIKDKVYDI…QAIDYIVNKK (76 aa)). The residue at position 39 (S39) is an O-(pantetheine 4'-phosphoryl)serine.

Belongs to the acyl carrier protein (ACP) family. 4'-phosphopantetheine is transferred from CoA to a specific serine of apo-ACP by AcpS. This modification is essential for activity because fatty acids are bound in thioester linkage to the sulfhydryl of the prosthetic group.

It is found in the cytoplasm. Its pathway is lipid metabolism; fatty acid biosynthesis. Its function is as follows. Carrier of the growing fatty acid chain in fatty acid biosynthesis. The sequence is that of Acyl carrier protein from Pelodictyon phaeoclathratiforme (strain DSM 5477 / BU-1).